The sequence spans 400 residues: Putative cytochrome P450 133B2 (400 aa).

C348 contributes to the heme binding site.

Belongs to the cytochrome P450 family. It depends on heme as a cofactor.

The polypeptide is Putative cytochrome P450 133B2 (cyp133B2) (Xylella fastidiosa (strain 9a5c)).